The following is a 704-amino-acid chain: D-(-)-3-hydroxybutyrate oligomer hydrolase (704 aa).

The signal sequence occupies residues methionine 1–alanine 31. Serine 309 serves as the catalytic Charge relay system.

This sequence belongs to the D-(-)-3-hydroxybutyrate oligomer hydrolase family.

Its subcellular location is the secreted. It catalyses the reaction (3R)-hydroxybutanoate dimer + H2O = 2 (R)-3-hydroxybutanoate + H(+). The protein operates within lipid metabolism; butanoate metabolism. In terms of biological role, participates in the degradation of poly-3-hydroxybutyrate (PHB). It works downstream of poly(3-hydroxybutyrate) depolymerase, hydrolyzing D(-)-3-hydroxybutyrate oligomers of various length (3HB-oligomers) into 3HB-monomers. The protein is D-(-)-3-hydroxybutyrate oligomer hydrolase of Albidiferax ferrireducens (strain ATCC BAA-621 / DSM 15236 / T118) (Rhodoferax ferrireducens).